The following is a 377-amino-acid chain: Nitric oxide reductase FlRd-NAD(+) reductase (377 aa).

The protein belongs to the FAD-dependent oxidoreductase family. FAD serves as cofactor.

It localises to the cytoplasm. It carries out the reaction 2 reduced [nitric oxide reductase rubredoxin domain] + NAD(+) + H(+) = 2 oxidized [nitric oxide reductase rubredoxin domain] + NADH. It participates in nitrogen metabolism; nitric oxide reduction. Its function is as follows. One of at least two accessory proteins for anaerobic nitric oxide (NO) reductase. Reduces the rubredoxin moiety of NO reductase. The protein is Nitric oxide reductase FlRd-NAD(+) reductase of Escherichia coli O139:H28 (strain E24377A / ETEC).